A 428-amino-acid chain; its full sequence is Enolase (428 aa).

Gln-163 provides a ligand contact to (2R)-2-phosphoglycerate. Glu-205 serves as the catalytic Proton donor. The Mg(2+) site is built by Asp-242, Glu-285, and Asp-312. Lys-337, Arg-366, Ser-367, and Lys-388 together coordinate (2R)-2-phosphoglycerate. Lys-337 serves as the catalytic Proton acceptor.

Belongs to the enolase family. The cofactor is Mg(2+).

The protein localises to the cytoplasm. The protein resides in the secreted. Its subcellular location is the cell surface. The enzyme catalyses (2R)-2-phosphoglycerate = phosphoenolpyruvate + H2O. Its pathway is carbohydrate degradation; glycolysis; pyruvate from D-glyceraldehyde 3-phosphate: step 4/5. In terms of biological role, catalyzes the reversible conversion of 2-phosphoglycerate (2-PG) into phosphoenolpyruvate (PEP). It is essential for the degradation of carbohydrates via glycolysis. In Polynucleobacter asymbioticus (strain DSM 18221 / CIP 109841 / QLW-P1DMWA-1) (Polynucleobacter necessarius subsp. asymbioticus), this protein is Enolase.